The primary structure comprises 395 residues: Aurora kinase A (395 aa).

Residues 1 to 114 are disordered; the sequence is MDRCKENCVS…QASLQKTEDT (114 aa). Composition is skewed to polar residues over residues 29–60 and 84–99; these read QIPS…SQAQ and RLNN…ASGN. Residues S40 and S50 each carry the phosphoserine modification. Over residues 100–114 the composition is skewed to basic and acidic residues; sequence DSEKEQASLQKTEDT. The Protein kinase domain occupies 124–374; it reads FDIGRPLGKG…LAEVLEHPWI (251 aa). ATP is bound by residues K134, K153, and 201 to 204; that span reads LEYA. D247 acts as the Proton acceptor in catalysis. K249 participates in a covalent cross-link: Glycyl lysine isopeptide (Lys-Gly) (interchain with G-Cter in SUMO2). Residues 251 to 252 and D265 each bind ATP; that span reads EN. The activation segment stretch occupies residues 271–284; it reads HAPSSRRTTMCGTL. Phosphothreonine is present on residues T278 and T279. Phosphoserine; by PKA and PAK is present on S333. Residues 376–385 show a composition bias toward polar residues; the sequence is ANSSKPPTGH. The interval 376-395 is disordered; the sequence is ANSSKPPTGHTSKEPTSKSS. Residues 386 to 395 show a composition bias toward basic and acidic residues; the sequence is TSKEPTSKSS.

Belongs to the protein kinase superfamily. Ser/Thr protein kinase family. Aurora subfamily. In terms of assembly, part of a complex composed of NEDD9, AURKA and CTTN; within the complex NEDD9 acts as a scaffold protein and is required for complex formation. Identified in a complex with AUNIP and NIN. Interacts with CPEB1, JTB, TACC1, TPX2, PPP2CA, as well as with the protein phosphatase type 1 (PP1) isoforms PPP1CA, PPP1CB and PPP1CC. Also interacts with its substrates ARHGEF2, BORA, KIF2A, PARD3, and p53/TP53. Interaction with BORA promotes phosphorylation of PLK1. Interacts with GADD45A, competing with its oligomerization. Interacts with FBXL7 and CIMAP3. Interacts (via C-terminus) with AUNIP (via C-terminus). Interacts with SIRT2. Interacts with FRY; this interaction facilitates AURKA-mediated PLK1 phosphorylation. Interacts with MYCN; interaction is phospho-independent and triggers AURKA activation; AURKA competes with FBXW7 for binding to unphosphorylated MYCN but not for binding to phosphorylated MYCN. Interacts with HNRNPU. Interacts with AAAS. Interacts with KLHL18 and CUL3. Interacts with FOXP1. Interacts with HDAC6; AURKA-mediated phosphorylation of HDAC6 promotes deacetylation of alpha-tubulin. Post-translationally, activated by phosphorylation at Thr-279; this brings about a change in the conformation of the activation segment. Phosphorylation at Thr-279 varies during the cell cycle and is highest during M phase. Autophosphorylated at Thr-279 upon TPX2 binding. Thr-279 can be phosphorylated by several kinases, including PAK and PKA. Protein phosphatase type 1 (PP1) binds AURKA and inhibits its activity by dephosphorylating Thr-279 during mitosis. Phosphorylation at Ser-333 decreases the kinase activity. PPP2CA controls degradation by dephosphorylating Ser-52 at the end of mitosis. In terms of processing, ubiquitinated by the anaphase-promoting complex (APC), leading to its degradation by the proteasome. Ubiquitinated by CHFR, leading to its degradation by the proteasome. Ubiquitinated by the E3 ubiquitin-protein ligase complex SCF(FBXL7) during mitosis, leading to its degradation by the proteasome. Detected in embryonic neurons in dorsal root ganglia and brain cortex (at protein level). Highly expressed in testis, in about one third of the seminiferous tubules. Expression is restricted to specific spermatocytes nearing completion of prophase, with levels falling off on transition to elongated spermatids. Highly expressed in the ovary, expression in the oocyte starts around the transition to large growing follicle. Abundant expression is seen in the proliferating granulosa and thecal cells of the growing follicle, and in the young corpus luteum. Very weakly expressed in spleen and intestine.

The protein localises to the cytoplasm. It localises to the cytoskeleton. The protein resides in the microtubule organizing center. Its subcellular location is the centrosome. It is found in the spindle pole. The protein localises to the centriole. It localises to the cell projection. The protein resides in the neuron projection. Its subcellular location is the cilium. It is found in the cilium basal body. The protein localises to the basolateral cell membrane. The catalysed reaction is L-seryl-[protein] + ATP = O-phospho-L-seryl-[protein] + ADP + H(+). It catalyses the reaction L-threonyl-[protein] + ATP = O-phospho-L-threonyl-[protein] + ADP + H(+). Activation of CDK1, appears to be an upstream event of AURKA activation. Phosphatase inhibitor-2 (PPP1R2) and TPX2 act also as activators. Inactivated by the G2 checkpoint. Inhibited by GADD45A and p53/TP53, and through dephosphorylation by protein phosphatase type 1 (PP1). MLN8054 is also a potent and selective inhibitor. Activated during the early phase of cilia disassembly in the presence of CIMAP3. Inhibited by the small molecule inhibitor VX-680. Functionally, mitotic serine/threonine kinase that contributes to the regulation of cell cycle progression. Associates with the centrosome and the spindle microtubules during mitosis and plays a critical role in various mitotic events including the establishment of mitotic spindle, centrosome duplication, centrosome separation as well as maturation, chromosomal alignment, spindle assembly checkpoint, and cytokinesis. Required for normal spindle positioning during mitosis and for the localization of NUMA1 and DCTN1 to the cell cortex during metaphase. Required for initial activation of CDK1 at centrosomes. Phosphorylates numerous target proteins, including ARHGEF2, BORA, BRCA1, CDC25B, DLGP5, HDAC6, KIF2A, LATS2, NDEL1, PARD3, PPP1R2, PLK1, RASSF1, TACC3, p53/TP53 and TPX2. Phosphorylates MCRS1 which is required for MCRS1-mediated kinetochore fiber assembly and mitotic progression. Regulates KIF2A tubulin depolymerase activity. Required for normal axon formation. Plays a role in microtubule remodeling during neurite extension. Important for microtubule formation and/or stabilization. Also acts as a key regulatory component of the p53/TP53 pathway, and particularly the checkpoint-response pathways critical for oncogenic transformation of cells, by phosphorylating and destabilizing p53/TP53. Phosphorylates its own inhibitors, the protein phosphatase type 1 (PP1) isoforms, to inhibit their activity. Inhibits cilia outgrowth. Required for cilia disassembly via phosphorylation of HDAC6 and subsequent deacetylation of alpha-tubulin. Regulates protein levels of the anti-apoptosis protein BIRC5 by suppressing the expression of the SCF(FBXL7) E3 ubiquitin-protein ligase substrate adapter FBXL7 through the phosphorylation of the transcription factor FOXP1. In Mus musculus (Mouse), this protein is Aurora kinase A (Aurka).